Consider the following 214-residue polypeptide: MASSILLLVVLAVVSAPVALVMAGDPDILTDYVIPAGSNAENITGDFFTFTGFRNPLSMNMSMPMPNANFTVTKATMAEFPALNGQSVSYAVLMYPPATLNPPHTHPRSAELLLLVDGALSVGFVDTTNKLYTQDLAAGDMFVFPKGMVHFQFNSGNQPAMALSAFGSAAAGLVSVPVTVFGTNIDDAVLAKSFKTDVPTIQKLKAGLTPPKKA.

Residues 1 to 23 (MASSILLLVVLAVVSAPVALVMA) form the signal peptide. 3 N-linked (GlcNAc...) asparagine glycosylation sites follow: asparagine 42, asparagine 60, and asparagine 69. Positions 59-202 (MNMSMPMPNA…SFKTDVPTIQ (144 aa)) constitute a Cupin type-1 domain. Mn(2+) contacts are provided by histidine 104, histidine 106, glutamate 111, and histidine 150.

The protein belongs to the germin family. Oligomer (believed to be a pentamer but probably hexamer).

Its subcellular location is the secreted. The protein localises to the extracellular space. The protein resides in the apoplast. Functionally, may play a role in plant defense. Probably has no oxalate oxidase activity even if the active site is conserved. The protein is Germin-like protein 9-3 of Oryza sativa subsp. japonica (Rice).